A 90-amino-acid polypeptide reads, in one-letter code: Small ribosomal subunit protein uS15c (90 aa).

It belongs to the universal ribosomal protein uS15 family. As to quaternary structure, part of the 30S ribosomal subunit.

Its subcellular location is the plastid. It localises to the chloroplast. This chain is Small ribosomal subunit protein uS15c (rps15-A), found in Brachypodium distachyon (Purple false brome).